The sequence spans 195 residues: Proteasome subunit beta 1 (195 aa).

A propeptide spans 1–6 (removed in mature form; by autocatalysis); the sequence is MEELPA. Thr7 functions as the Nucleophile in the catalytic mechanism.

This sequence belongs to the peptidase T1B family. The 20S proteasome core is composed of 14 alpha and 14 beta subunits that assemble into four stacked heptameric rings, resulting in a barrel-shaped structure. The two inner rings, each composed of seven catalytic beta subunits, are sandwiched by two outer rings, each composed of seven alpha subunits. The catalytic chamber with the active sites is on the inside of the barrel. Has a gated structure, the ends of the cylinder being occluded by the N-termini of the alpha-subunits. Is capped at one or both ends by the proteasome regulatory ATPase, PAN.

The protein resides in the cytoplasm. The enzyme catalyses Cleavage of peptide bonds with very broad specificity.. The formation of the proteasomal ATPase PAN-20S proteasome complex, via the docking of the C-termini of PAN into the intersubunit pockets in the alpha-rings, triggers opening of the gate for substrate entry. Interconversion between the open-gate and close-gate conformations leads to a dynamic regulation of the 20S proteasome proteolysis activity. Component of the proteasome core, a large protease complex with broad specificity involved in protein degradation. The protein is Proteasome subunit beta 1 of Sulfolobus acidocaldarius (strain ATCC 33909 / DSM 639 / JCM 8929 / NBRC 15157 / NCIMB 11770).